The sequence spans 250 residues: Transcriptional activator protein EchR (250 aa).

The HTH luxR-type domain maps to 173–238; it reads KSQEPNIFSQ…HAIRLGVEMN (66 aa). Residues 197 to 216 constitute a DNA-binding region (H-T-H motif); it reads YQEIALILGITTSTVKFHIG.

The protein belongs to the autoinducer-regulated transcriptional regulatory protein family.

Functions as a potential ohlL-responsive transcriptional regulator. The sequence is that of Transcriptional activator protein EchR (echR) from Dickeya chrysanthemi (Pectobacterium chrysanthemi).